Here is a 59-residue protein sequence, read N- to C-terminus: Sperm protamine P1-type (59 aa).

A disordered region spans residues Met-1–Ser-59.

Belongs to the protamine P1 family. In terms of tissue distribution, testis.

It is found in the nucleus. It localises to the chromosome. In terms of biological role, protamines substitute for histones in the chromatin of sperm during the haploid phase of spermatogenesis. They compact sperm DNA into a highly condensed, stable and inactive complex. This chain is Sperm protamine P1-type, found in Chrysemys picta bellii (Western painted turtle).